The following is a 430-amino-acid chain: Tol-Pal system protein TolB (430 aa).

The N-terminal stretch at 1 to 21 (MKQALRVAFGFLMLWAAMLHA) is a signal peptide.

The protein belongs to the TolB family. As to quaternary structure, the Tol-Pal system is composed of five core proteins: the inner membrane proteins TolA, TolQ and TolR, the periplasmic protein TolB and the outer membrane protein Pal. They form a network linking the inner and outer membranes and the peptidoglycan layer.

Its subcellular location is the periplasm. In terms of biological role, part of the Tol-Pal system, which plays a role in outer membrane invagination during cell division and is important for maintaining outer membrane integrity. TolB occupies a key intermediary position in the Tol-Pal system because it communicates directly with both membrane-embedded components, Pal in the outer membrane and TolA in the inner membrane. The chain is Tol-Pal system protein TolB from Escherichia fergusonii (strain ATCC 35469 / DSM 13698 / CCUG 18766 / IAM 14443 / JCM 21226 / LMG 7866 / NBRC 102419 / NCTC 12128 / CDC 0568-73).